The primary structure comprises 336 residues: Anthranilate phosphoribosyltransferase (336 aa).

Residues G83, 86-87, T91, 93-96, 111-119, and S123 contribute to the 5-phospho-alpha-D-ribose 1-diphosphate site; these read GD, NIST, and KHGNRSVSS. Anthranilate is bound at residue G83. S95 provides a ligand contact to Mg(2+). N114 contributes to the anthranilate binding site. R169 is an anthranilate binding site. Mg(2+)-binding residues include D227 and E228.

The protein belongs to the anthranilate phosphoribosyltransferase family. In terms of assembly, homodimer. Mg(2+) serves as cofactor.

It catalyses the reaction N-(5-phospho-beta-D-ribosyl)anthranilate + diphosphate = 5-phospho-alpha-D-ribose 1-diphosphate + anthranilate. It participates in amino-acid biosynthesis; L-tryptophan biosynthesis; L-tryptophan from chorismate: step 2/5. Functionally, catalyzes the transfer of the phosphoribosyl group of 5-phosphorylribose-1-pyrophosphate (PRPP) to anthranilate to yield N-(5'-phosphoribosyl)-anthranilate (PRA). The polypeptide is Anthranilate phosphoribosyltransferase (Vibrio campbellii (strain ATCC BAA-1116)).